Reading from the N-terminus, the 305-residue chain is Acyl transferase (305 aa).

Catalysis depends on charge relay system residues Ser114, Asp211, and His241.

Belongs to the LuxD family.

Its pathway is lipid metabolism; fatty acid reduction for biolumincescence. Functionally, acyl transferase is part of the fatty acid reductase system required for aldehyde biosynthesis; it produces fatty acids for the luminescent reaction. The polypeptide is Acyl transferase (Vibrio campbellii (strain ATCC BAA-1116)).